The following is a 220-amino-acid chain: MSVKIHYQNTHFITSAPDIRHLPEDEGIEIAFAGRSNTGKSSSLNRLTNQKNLAKTSKTPGRTQLINLFKVADGCHIVDLPGYGFAQVPLEMKLKWQRALGEYLQKRQSLKGLVVLMDIRHPMKDLDQQLIIWAVECGIPVQVMLTKADKLKSGARKAQVLKVREEAKTFGGDVAVDAFSSLSGIGVDTLRAKLDEWYAPMLAALAEQEEGEQPESSTDQ.

One can recognise an EngB-type G domain in the interval 26 to 200 (EGIEIAFAGR…RAKLDEWYAP (175 aa)). GTP contacts are provided by residues 34–41 (GRSNTGKS), 61–65 (GRTQL), 79–82 (DLPG), 146–149 (TKAD), and 179–181 (FSS). Mg(2+) is bound by residues Ser-41 and Thr-63.

Belongs to the TRAFAC class TrmE-Era-EngA-EngB-Septin-like GTPase superfamily. EngB GTPase family. Mg(2+) serves as cofactor.

Functionally, necessary for normal cell division and for the maintenance of normal septation. This is Probable GTP-binding protein EngB from Vibrio cholerae serotype O1 (strain ATCC 39541 / Classical Ogawa 395 / O395).